The chain runs to 135 residues: Small ribosomal subunit protein uS11 (135 aa).

Positions 1 to 11 (MPPKARAGAAV) are enriched in low complexity. The interval 1–22 (MPPKARAGAAVKKVRRKERKNV) is disordered.

This sequence belongs to the universal ribosomal protein uS11 family. In terms of assembly, part of the 30S ribosomal subunit. Interacts with proteins S7 and S18. Binds to IF-3.

Its function is as follows. Located on the platform of the 30S subunit, it bridges several disparate RNA helices of the 16S rRNA. Forms part of the Shine-Dalgarno cleft in the 70S ribosome. This Salinispora tropica (strain ATCC BAA-916 / DSM 44818 / JCM 13857 / NBRC 105044 / CNB-440) protein is Small ribosomal subunit protein uS11.